The sequence spans 820 residues: Sucrose synthase 2 (820 aa).

Residues 276–753 (MVFNVVILSP…GLKRIYEKYT (478 aa)) form a GT-B glycosyltransferase region.

It belongs to the glycosyltransferase 1 family. Plant sucrose synthase subfamily.

It catalyses the reaction an NDP-alpha-D-glucose + D-fructose = a ribonucleoside 5'-diphosphate + sucrose + H(+). Sucrose-cleaving enzyme that provides UDP-glucose and fructose for various metabolic pathways. This Tulipa gesneriana (Garden tulip) protein is Sucrose synthase 2.